The primary structure comprises 232 residues: Triosephosphate isomerase (232 aa).

6–8 is a binding site for substrate; the sequence is NFK. His-90 serves as the catalytic Electrophile. The active-site Proton acceptor is the Glu-159. Substrate-binding residues include Gly-165 and Ser-195.

This sequence belongs to the triosephosphate isomerase family. Homodimer.

It is found in the cytoplasm. It carries out the reaction D-glyceraldehyde 3-phosphate = dihydroxyacetone phosphate. It functions in the pathway carbohydrate biosynthesis; gluconeogenesis. It participates in carbohydrate degradation; glycolysis; D-glyceraldehyde 3-phosphate from glycerone phosphate: step 1/1. In terms of biological role, involved in the gluconeogenesis. Catalyzes stereospecifically the conversion of dihydroxyacetone phosphate (DHAP) to D-glyceraldehyde-3-phosphate (G3P). This is Triosephosphate isomerase from Wolinella succinogenes (strain ATCC 29543 / DSM 1740 / CCUG 13145 / JCM 31913 / LMG 7466 / NCTC 11488 / FDC 602W) (Vibrio succinogenes).